The chain runs to 347 residues: Heat-inducible transcription repressor HrcA (347 aa).

This sequence belongs to the HrcA family.

In terms of biological role, negative regulator of class I heat shock genes (grpE-dnaK-dnaJ and groELS operons). Prevents heat-shock induction of these operons. This is Heat-inducible transcription repressor HrcA from Rhodococcus jostii (strain RHA1).